A 108-amino-acid polypeptide reads, in one-letter code: DNA-directed RNA polymerase III subunit RPC10 (108 aa).

The Zn(2+) site is built by cysteine 5, cysteine 8, cysteine 25, cysteine 28, cysteine 69, and cysteine 72. The segment at 5–28 (CPGCGNGLIVEEGQRCHRFACNTC) adopts a C4-type zinc-finger fold. Residues 65–107 (TAEPCPKCEHPRAYFMQLQTRYADEPMTTFYKCCNAQCGHRWR) form a TFIIS-type zinc finger. Residues 88 to 89 (DE) carry the Hairpin motif. Positions 98 and 102 each coordinate Zn(2+).

It belongs to the archaeal RpoM/eukaryotic RPA12/RPB9/RPC11 RNA polymerase family. In terms of assembly, component of the RNA polymerase III complex consisting of 17 subunits: a ten-subunit horseshoe-shaped catalytic core composed of POLR3A/RPC1, POLR3B/RPC2, POLR1C/RPAC1, POLR1D/RPAC2, POLR3K/RPC10, POLR2E/RPABC1, POLR2F/RPABC2, POLR2H/RPABC3, POLR2K/RPABC4 and POLR2L/RPABC5; a mobile stalk composed of two subunits POLR3H/RPC8 and CRCP/RPC9, protruding from the core and functioning primarily in transcription initiation; and additional subunits homologous to general transcription factors of the RNA polymerase II machinery, POLR3C/RPC3-POLR3F/RPC6-POLR3G/RPC7 heterotrimer required for transcription initiation and POLR3D/RPC4-POLR3E/RPC5 heterodimer involved in both transcription initiation and termination.

The protein localises to the nucleus. In terms of biological role, core component of RNA polymerase III (Pol III) which synthesizes small non-coding RNAs using the four ribonucleoside triphosphates as substrates. Can mediate Pol I proofreading of the nascent RNA transcript. Anchors into the Pol III active site to constantly monitor transcription fidelity, cleaves mis-incorporated 5'-ribonucleotides and restarts the transcription process. Once Pol III reaches the poly(dT) termination signal, can induce Pol III clamp opening and transcription termination. Pol III plays an important role in sensing and limiting infection by intracellular bacteria and DNA viruses. Acts as a nuclear and cytosolic DNA sensor involved in innate immune response. Can sense non-self dsDNA that serves as template for transcription into dsRNA. The non-self RNA polymerase III transcripts, such as Epstein-Barr virus-encoded RNAs (EBERs) induce type I interferon and NF-kappa-B through the RIG-I pathway. This chain is DNA-directed RNA polymerase III subunit RPC10 (POLR3K), found in Bos taurus (Bovine).